Reading from the N-terminus, the 605-residue chain is Capsid scaffolding protein (605 aa).

Active-site charge relay system residues include histidine 52, serine 120, and histidine 139. The interaction with pAP stretch occupies residues 326–344; sequence GEFVLIPTAYYSQLLTGQT. The segment at 585–605 is interaction with major capsid protein; it reads IQGSTADDADMFANQMMVGRC.

Belongs to the herpesviridae capsid scaffolding protein family. Homomultimer. Interacts with major capsid protein. In terms of assembly, exists in a monomer-dimer equilibrium with the dimer being the active species. In terms of processing, capsid scaffolding protein is cleaved by assemblin after formation of the spherical procapsid. As a result, the capsid obtains its mature, icosahedral shape. Cleavages occur at two or more sites: release (R-site) and maturation (M-site).

The protein localises to the host cytoplasm. Its subcellular location is the host nucleus. It catalyses the reaction Cleaves -Ala-|-Ser- and -Ala-|-Ala- bonds in the scaffold protein.. In terms of biological role, acts as a scaffold protein by binding major capsid protein in the cytoplasm, inducing the nuclear localization of both proteins. Multimerizes in the nucleus such as major capsid protein forms the icosahedral T=16 capsid. Autocatalytic cleavage releases the assembly protein, and subsequently abolishes interaction with major capsid protein. Cleavages products are evicted from the capsid before or during DNA packaging. Functionally, protease that plays an essential role in virion assembly within the nucleus. Catalyzes the cleavage of the assembly protein after formation of the spherical procapsid. By that cleavage, the capsid matures and gains its icosahedral shape. The cleavage sites seem to include -Ala-Ser-, -Ala-Ala-, as well as Ala-Thr bonds. Assemblin and cleavages products are evicted from the capsid before or during DNA packaging. Its function is as follows. Plays a major role in capsid assembly. Acts as a scaffold protein by binding major capsid protein. Multimerizes in the nucleus such as major capsid protein forms the icosahedral T=16 capsid. Cleaved by assemblin after capsid completion. The cleavages products are evicted from the capsid before or during DNA packaging. This is Capsid scaffolding protein (33) from Varicella-zoster virus (strain Dumas) (HHV-3).